We begin with the raw amino-acid sequence, 278 residues long: MHEYIRKSLTIDCEAVTNYIVERIREYLEFSNKKGGVIGVSGGVDSAVTATLLAKATDNFFILLMPSSSTPKIDLDDSFEMIKFLNAQNKYKLINIDEIVKSFSNKIETENKYIIGNIKARVRMIILYAYAQMLDYLVVGTGDKSELLLGYFTKYGDGGVDVLPIGDLYKTQVRMLGKCLGLPERIVTKPSSPALWEGQTAEGELGIDYETIDSILYLRFDEMRSEDEIVKMLGIPIDIVKKVDRLVKISQHKRLPPEIFRLSGRAINSDWRFPRRWA.

Residue 39–46 participates in ATP binding; the sequence is GVSGGVDS. D45 lines the Mg(2+) pocket. R121 is a binding site for deamido-NAD(+). T141 contacts ATP. E146 provides a ligand contact to Mg(2+). Deamido-NAD(+) is bound by residues K154 and D161. K170 and S192 together coordinate ATP. Position 252 to 253 (252 to 253) interacts with deamido-NAD(+); it reads HK.

This sequence belongs to the NAD synthetase family. Homodimer.

It catalyses the reaction deamido-NAD(+) + NH4(+) + ATP = AMP + diphosphate + NAD(+) + H(+). It participates in cofactor biosynthesis; NAD(+) biosynthesis; NAD(+) from deamido-NAD(+) (ammonia route): step 1/1. Catalyzes the ATP-dependent amidation of deamido-NAD to form NAD. Uses ammonia as a nitrogen source. The chain is NH(3)-dependent NAD(+) synthetase from Saccharolobus solfataricus (strain ATCC 35092 / DSM 1617 / JCM 11322 / P2) (Sulfolobus solfataricus).